Here is a 175-residue protein sequence, read N- to C-terminus: MTLHVGAEPAPREEEIAEMADEPRELEFDLSVQYGDEVTGDVRKACPKRKLIAEWIEPALFSSAQLTVRFVGEEEGRTLNDGYRHKDYPTNVLTFAYDPLPDGTVIGDLVLCCPVVEKEAQEQGKPLAAHYAHLLVHGALHAQGYDHETSEEDAAEMEALEVAILAKLGFPNPYQ.

Residues H137, H141, and H147 each contribute to the Zn(2+) site.

The protein belongs to the endoribonuclease YbeY family. Zn(2+) serves as cofactor.

The protein localises to the cytoplasm. Single strand-specific metallo-endoribonuclease involved in late-stage 70S ribosome quality control and in maturation of the 3' terminus of the 16S rRNA. The sequence is that of Endoribonuclease YbeY from Burkholderia ambifaria (strain ATCC BAA-244 / DSM 16087 / CCUG 44356 / LMG 19182 / AMMD) (Burkholderia cepacia (strain AMMD)).